A 548-amino-acid polypeptide reads, in one-letter code: Esterase-5A (548 aa).

The N-terminal stretch at 1–21 is a signal peptide; the sequence is MHLVRWLICLIQLWVQLGAAG. Cys87 and Cys106 are oxidised to a cystine. Residues Asn95 and Asn116 are each glycosylated (N-linked (GlcNAc...) asparagine). Catalysis depends on Ser210, which acts as the Acyl-ester intermediate. Cys262 and Cys274 are joined by a disulfide. N-linked (GlcNAc...) asparagine glycosylation occurs at Asn479. Cys518 and Cys539 form a disulfide bridge.

The protein belongs to the type-B carboxylesterase/lipase family.

It localises to the secreted. It carries out the reaction a carboxylic ester + H2O = an alcohol + a carboxylate + H(+). In Drosophila pseudoobscura pseudoobscura (Fruit fly), this protein is Esterase-5A (Est-5A).